Reading from the N-terminus, the 339-residue chain is Dehydrogenase/reductase SDR family member 7 (339 aa).

An N-terminal signal peptide occupies residues 1 to 28; it reads MNWELLLWLLVLCALLLLLVQLLRFLRA. Ser60 and Ile62 together coordinate NAD(+). Ser190 provides a ligand contact to substrate. Tyr203, Lys207, and Ser239 together coordinate NAD(+). Tyr203 (proton acceptor) is an active-site residue.

Belongs to the short-chain dehydrogenases/reductases (SDR) family. As to expression, found predominantly in the adrenal glands, liver, thyroid, prostate, small intestine, colon, stomach, kidney and brain. Lower levels observed in skeletal muscle, the lung and the spleen.

The protein resides in the endoplasmic reticulum membrane. The catalysed reaction is all-trans-retinol + NADP(+) = all-trans-retinal + NADPH + H(+). It carries out the reaction 5alpha-androstane-3alpha,17beta-diol + NADP(+) = 17beta-hydroxy-5alpha-androstan-3-one + NADPH + H(+). Its function is as follows. NADPH-dependent oxidoreductase which catalyzes the reduction of a variety of compounds bearing carbonyl groups including steroids, retinoids and xenobiotics. Catalyzes the reduction/inactivation of 5alpha-dihydrotestosterone to 3alpha-androstanediol, with a possible role in the modulation of androgen receptor function. Involved in the reduction of all-trans-retinal to all-trans-retinol. Converts cortisone to 20beta-dihydrocortisone in vitro, although the physiological relevance of this activity is questionable. Reduces exogenous compounds such as quinones (1,2-naphtoquinone, 9,10-phenantrenequinone and benzoquinone) and other xenobiotics (alpha-diketones) in vitro, suggesting a role in the biotransformation of xenobiotics with carbonyl group. A dehydrogenase activity has not been detected so far. May play a role as tumor suppressor. The chain is Dehydrogenase/reductase SDR family member 7 from Homo sapiens (Human).